The primary structure comprises 189 residues: Dynactin subunit 6 (189 aa).

It belongs to the dynactin subunits 5/6 family. Dynactin subunit 6 subfamily. Subunit of dynactin, a multiprotein complex part of a tripartite complex with dynein and a adapter, such as BICDL1, BICD2 or HOOK3. The dynactin complex is built around ACTR1A/ACTB filament and consists of an actin-related filament composed of a shoulder domain, a pointed end and a barbed end.

Its subcellular location is the cytoplasm. The protein resides in the cytoskeleton. Part of the dynactin complex that activates the molecular motor dynein for ultra-processive transport along microtubules. In Dictyostelium discoideum (Social amoeba), this protein is Dynactin subunit 6 (dynF).